Reading from the N-terminus, the 50-residue chain is Temporin-SHc (50 aa).

Positions 1 to 10 (FLGTINLSLC) are cleaved as a signal peptide. Residues 11 to 35 (EQERDADEEERRDEPDGSNVEVEKR) constitute a propeptide that is removed on maturation. F48 is modified (phenylalanine amide).

In terms of tissue distribution, expressed by the skin glands.

Its subcellular location is the secreted. It is found in the target cell membrane. In terms of biological role, amphipathic alpha-helical antimicrobial peptide with potent activity against some Gram-positive bacteria (MIC=4-&gt;80 uM), potent activity against fungi (MIC=10-20 uM), and no activity against Gram-negative bacteria. Does not display anti-leishmania activity. Does not show hemolytic activity (LC(50)&gt;80 uM). This Pelophylax saharicus (Sahara frog) protein is Temporin-SHc.